Consider the following 265-residue polypeptide: U6 snRNA phosphodiesterase 1 (265 aa).

A disordered region spans residues 1–22 (MSLVCYESSSSGEDDDETISDN). H109 (proton acceptor) is an active-site residue. AMP-binding positions include 109 to 111 (HLS) and 195 to 201 (DFLLHIS). 197–201 (LLHIS) provides a ligand contact to UMP. H199 (proton donor) is an active-site residue.

Belongs to the 2H phosphoesterase superfamily. USB1 family.

The protein resides in the nucleus. The catalysed reaction is a 3'-end uridylyl-uridine-RNA = a 3'-end 2',3'-cyclophospho-uridine-RNA + uridine. Functionally, 3'-5' RNA exonuclease that trims the 3' end of oligo(U) tracts of the pre-U6 small nuclear RNA (snRNA) molecule, leading to the formation of a U6 snRNA 3' end-terminated with a 2',3'-cyclic phosphate.d. Participates in the U6 snRNA 3' end processing that prevents U6 snRNA degradation. In Schizosaccharomyces pombe (strain 972 / ATCC 24843) (Fission yeast), this protein is U6 snRNA phosphodiesterase 1.